The primary structure comprises 238 residues: ATP-dependent dethiobiotin synthetase BioD (238 aa).

Position 12–17 (12–17 (GVGKTV)) interacts with ATP. Thr16 contacts Mg(2+). Lys37 is an active-site residue. Residue Thr41 coordinates substrate. ATP-binding positions include Asp50, 109–112 (EGAG), 170–171 (GS), and 200–202 (PAG). Mg(2+) contacts are provided by Asp50 and Glu109.

It belongs to the dethiobiotin synthetase family. As to quaternary structure, homodimer. The cofactor is Mg(2+).

It localises to the cytoplasm. It carries out the reaction (7R,8S)-7,8-diammoniononanoate + CO2 + ATP = (4R,5S)-dethiobiotin + ADP + phosphate + 3 H(+). Its pathway is cofactor biosynthesis; biotin biosynthesis; biotin from 7,8-diaminononanoate: step 1/2. Catalyzes a mechanistically unusual reaction, the ATP-dependent insertion of CO2 between the N7 and N8 nitrogen atoms of 7,8-diaminopelargonic acid (DAPA, also called 7,8-diammoniononanoate) to form a ureido ring. The chain is ATP-dependent dethiobiotin synthetase BioD from Frankia casuarinae (strain DSM 45818 / CECT 9043 / HFP020203 / CcI3).